A 296-amino-acid polypeptide reads, in one-letter code: MMIKQYLQVTKPGIIFGNLISVIGGFLLASKGDIDYPLFLSTLLGVSLVVASGCVFNNYIDRDIDKIMERTKNRVLVKGLIDPKVSLIYASVLGIAGMLLLYVAANALAMMLAVIGFVIYVGVYSLYMKRKSVYGTLIGSLSGAAPPVIGYCAVTGQFDTGALILLLIFSLWQMPHSYAIAIFRFKDYQAANIPVLPVIKGISVTKNHITLYILAFMVATLMLTLSGYAGYKYLVVAAAVSVWWLGMALRGYKATNDSVWARKLFVFSIIAITSLSVMMSVDFNVHSSAVLLTYAG.

The next 9 membrane-spanning stretches (helical) occupy residues valine 9–alanine 29, tyrosine 36–phenylalanine 56, valine 75–isoleucine 95, leucine 99–isoleucine 119, valine 133–alanine 153, leucine 163–phenylalanine 183, isoleucine 209–alanine 229, leucine 234–alanine 254, and phenylalanine 265–valine 285.

Belongs to the UbiA prenyltransferase family. Protoheme IX farnesyltransferase subfamily.

The protein localises to the cell inner membrane. The enzyme catalyses heme b + (2E,6E)-farnesyl diphosphate + H2O = Fe(II)-heme o + diphosphate. Its pathway is porphyrin-containing compound metabolism; heme O biosynthesis; heme O from protoheme: step 1/1. Functionally, converts heme B (protoheme IX) to heme O by substitution of the vinyl group on carbon 2 of heme B porphyrin ring with a hydroxyethyl farnesyl side group. The protein is Protoheme IX farnesyltransferase of Yersinia pestis bv. Antiqua (strain Antiqua).